The primary structure comprises 485 residues: Sodium-coupled neutral amino acid symporter 1 (485 aa).

The Cytoplasmic segment spans residues 1 to 74; sequence MMHFKSGLEL…EYIPGTTSLG (74 aa). Ser6 bears the Phosphoserine mark. Thr11 is modified (phosphothreonine). 4 positions are modified to phosphoserine: Ser25, Ser28, Ser49, and Ser52. Residue Thr54 is modified to Phosphothreonine. The residue at position 56 (Ser56) is a Phosphoserine. Residues 75 to 97 traverse the membrane as a helical segment; sequence MSVFNLSNAIMGSGILGLAFALA. Topologically, residues 98–112 are extracellular; sequence NTGILLFLILLTSVT. Residues 113–133 traverse the membrane as a helical segment; it reads LLSIYSINLLLICSKETGCMV. At 134-148 the chain is on the cytoplasmic side; it reads YEKLGEQVFGTTGKL. Residues 149-169 traverse the membrane as a helical segment; the sequence is VIFGATSLQNTGAMLSYLFIV. At 170–188 the chain is on the extracellular side; that stretch reads KNELPSAIKSLMGEEDAFS. A helical membrane pass occupies residues 189 to 211; it reads AWYVDGRVLVVMVTFGIILPLCL. Topologically, residues 212 to 216 are cytoplasmic; it reads LKNLG. A helical membrane pass occupies residues 217–237; it reads YLGYTSGFSLSCMMFFLIVVI. Residues 238-273 lie on the Extracellular side of the membrane; sequence YKKFQTPCMSVEQNSTVSANVTDACTPKYVTFNSKT. Cys245 and Cys262 form a disulfide bridge. N-linked (GlcNAc...) asparagine glycans are attached at residues Asn251 and Asn257. The chain crosses the membrane as a helical span at residues 274–294; that stretch reads VYALPTIAFAFVCHPSVLPIY. Residues 295-310 lie on the Cytoplasmic side of the membrane; it reads SELKDRSQKKMQMVSN. A helical membrane pass occupies residues 311–331; that stretch reads ISFFAMFVMYFLTAIFGYLTF. Topologically, residues 332-348 are extracellular; that stretch reads YEKVQSDLLHKYQSTGD. The chain crosses the membrane as a helical span at residues 349–369; the sequence is ILILTVRLAVIVAVILTVPVL. At 370–391 the chain is on the cytoplasmic side; it reads FFTVRSSLFELAKKTKFHLCRH. A helical membrane pass occupies residues 392-412; it reads VLVTIILLIIINLLVIFIPSM. Over 413 to 414 the chain is Extracellular; that stretch reads KD. Residues 415–435 form a helical membrane-spanning segment; it reads IFGVVGVTSANMLIFILPSSL. Over 436–450 the chain is Cytoplasmic; sequence YLKITNQDGDKGTQR. A helical membrane pass occupies residues 451–471; the sequence is IWAALFLGLGVLFSLISIPLV. The Extracellular segment spans residues 472-485; that stretch reads IYDWACSSGTDEGH.

Belongs to the amino acid/polyamine transporter 2 family. In terms of processing, N-glycosylation plays an important role in the L-glutamine transport. As to expression, specifically expressed in brain and retina (at protein level). Also detected in spleen, small intestine and lung.

It is found in the cell membrane. The catalysed reaction is L-glutamine(in) + Na(+)(in) = L-glutamine(out) + Na(+)(out). It carries out the reaction L-alanine(in) + Na(+)(in) = L-alanine(out) + Na(+)(out). It catalyses the reaction L-histidine(in) + Na(+)(in) = L-histidine(out) + Na(+)(out). The enzyme catalyses L-asparagine(in) + Na(+)(in) = L-asparagine(out) + Na(+)(out). The catalysed reaction is L-serine(in) + Na(+)(in) = L-serine(out) + Na(+)(out). It carries out the reaction L-cysteine(in) + Na(+)(in) = L-cysteine(out) + Na(+)(out). It catalyses the reaction L-methionine(in) + Na(+)(in) = L-methionine(out) + Na(+)(out). The enzyme catalyses glycine(in) + Na(+)(in) = glycine(out) + Na(+)(out). The catalysed reaction is L-threonine(in) + Na(+)(in) = L-threonine(out) + Na(+)(out). It carries out the reaction L-proline(in) + Na(+)(in) = L-proline(out) + Na(+)(out). Its activity is regulated as follows. Inhibited by alpha-(methylamino)isobutyric acid (MeAIB). Inhibited by lithium, potassium, choline ions, N-methylglucamine. The pH dependence has an allosteric effect on the transport. Functionally, symporter that cotransports short-chain neutral amino acids and sodium ions from the extraccellular to the intracellular side of the cell membrane. The transport is elctrogenic, pH dependent and driven by the Na(+) electrochemical gradient. Participates in the astroglia-derived glutamine transport into GABAergic interneurons for neurotransmitter GABA de novo synthesis. May also contributes to amino acid transport in placental trophoblast. Regulates synaptic plasticity. This is Sodium-coupled neutral amino acid symporter 1 from Mus musculus (Mouse).